A 214-amino-acid chain; its full sequence is Pyridoxine/pyridoxamine 5'-phosphate oxidase (214 aa).

Residues 9 to 12 and Lys-67 contribute to the substrate site; that span reads RKNY. FMN-binding positions include 62 to 67, 77 to 78, Lys-84, and Gln-106; these read RMVLLK and YT. Tyr-124, Arg-128, and Ser-132 together coordinate substrate. FMN contacts are provided by residues 141 to 142 and Trp-186; that span reads QS. 192–194 is a binding site for substrate; it reads RLH. Arg-196 lines the FMN pocket.

This sequence belongs to the pyridoxamine 5'-phosphate oxidase family. In terms of assembly, homodimer. FMN is required as a cofactor.

It carries out the reaction pyridoxamine 5'-phosphate + O2 + H2O = pyridoxal 5'-phosphate + H2O2 + NH4(+). It catalyses the reaction pyridoxine 5'-phosphate + O2 = pyridoxal 5'-phosphate + H2O2. It participates in cofactor metabolism; pyridoxal 5'-phosphate salvage; pyridoxal 5'-phosphate from pyridoxamine 5'-phosphate: step 1/1. The protein operates within cofactor metabolism; pyridoxal 5'-phosphate salvage; pyridoxal 5'-phosphate from pyridoxine 5'-phosphate: step 1/1. In terms of biological role, catalyzes the oxidation of either pyridoxine 5'-phosphate (PNP) or pyridoxamine 5'-phosphate (PMP) into pyridoxal 5'-phosphate (PLP). The chain is Pyridoxine/pyridoxamine 5'-phosphate oxidase from Gloeothece citriformis (strain PCC 7424) (Cyanothece sp. (strain PCC 7424)).